The primary structure comprises 150 residues: SsrA-binding protein (150 aa).

Belongs to the SmpB family.

The protein localises to the cytoplasm. Functionally, required for rescue of stalled ribosomes mediated by trans-translation. Binds to transfer-messenger RNA (tmRNA), required for stable association of tmRNA with ribosomes. tmRNA and SmpB together mimic tRNA shape, replacing the anticodon stem-loop with SmpB. tmRNA is encoded by the ssrA gene; the 2 termini fold to resemble tRNA(Ala) and it encodes a 'tag peptide', a short internal open reading frame. During trans-translation Ala-aminoacylated tmRNA acts like a tRNA, entering the A-site of stalled ribosomes, displacing the stalled mRNA. The ribosome then switches to translate the ORF on the tmRNA; the nascent peptide is terminated with the 'tag peptide' encoded by the tmRNA and targeted for degradation. The ribosome is freed to recommence translation, which seems to be the essential function of trans-translation. This chain is SsrA-binding protein, found in Flavobacterium psychrophilum (strain ATCC 49511 / DSM 21280 / CIP 103535 / JIP02/86).